Consider the following 377-residue polypeptide: Probable G-protein coupled receptor 27 (377 aa).

Residues 1–24 (MANASEPGGGGGGAEAAALGLRLA) are Extracellular-facing. Asn-3 carries an N-linked (GlcNAc...) asparagine glycan. A helical membrane pass occupies residues 25–45 (TLSLLLCVSLAGNVLFALLIV). At 46 to 56 (RERSLHRAPYY) the chain is on the cytoplasmic side. Residues 57-77 (LLLDLCLADGLRALACLPAVM) form a helical membrane-spanning segment. Over 78–98 (LAARRAAAAAGTPPGALGCKL) the chain is Extracellular. The cysteines at positions 96 and 173 are disulfide-linked. The chain crosses the membrane as a helical span at residues 99 to 119 (LAFLAALFCFHAAFLLLGVGV). At 120–140 (TRYLAIAHHRFYAERLAGWPC) the chain is on the cytoplasmic side. A helical transmembrane segment spans residues 141 to 161 (AAMLVCAAWALALAAAFPPVL). The Extracellular segment spans residues 162 to 183 (DGGGADDEDAPCALEQRPDGAP). Residues 184-204 (GALGFLLLLAAVVGATHLVYL) traverse the membrane as a helical segment. Residues 205–287 (RLLFFIHDRR…FKTEKRLCKM (83 aa)) are Cytoplasmic-facing. The helical transmembrane segment at 288 to 308 (FYAITLLFLLLWGPYVVASYL) threads the bilayer. Residues 309–322 (RVLVRPGAVPQAYL) are Extracellular-facing. The chain crosses the membrane as a helical span at residues 323–343 (TASVWLTFAQAGINPVVCFLF). The Cytoplasmic portion of the chain corresponds to 344 to 377 (NRELRDCFRAQFPCCQSPQATQATLPCDLKGIGL).

This sequence belongs to the G-protein coupled receptor 1 family. In terms of tissue distribution, expressed as a 3.0 kb transcript, in whole brain, hippocampus, striatum, frontal cortex, thalamus, pons and hypothalamus. A lower molecular weight transcript was detected in all regions examined, except the hypothalamus.

Its subcellular location is the cell membrane. Functionally, orphan receptor. Possible candidate for amine-like G-protein coupled receptor. The protein is Probable G-protein coupled receptor 27 (Gpr27) of Rattus norvegicus (Rat).